Consider the following 74-residue polypeptide: MSTALAKPQMRGLLARRLRFHIVGAFMVSLGFATFYKFAVAEKRKKAYADFYRNYDSMKDFEEMRKAGIFQSAK.

Residues 2-12 (STALAKPQMRG) are Mitochondrial matrix-facing. The chain crosses the membrane as a helical span at residues 13-53 (LLARRLRFHIVGAFMVSLGFATFYKFAVAEKRKKAYADFYR). At 54–74 (NYDSMKDFEEMRKAGIFQSAK) the chain is on the mitochondrial intermembrane side.

The protein belongs to the cytochrome c oxidase subunit 6c family. Component of the cytochrome c oxidase (complex IV, CIV), a multisubunit enzyme composed of 14 subunits. The complex is composed of a catalytic core of 3 subunits MT-CO1, MT-CO2 and MT-CO3, encoded in the mitochondrial DNA, and 11 supernumerary subunits COX4I1 (or COX4I2), COX5A, COX5B, COX6A2 (or COX6A1), COX6B1 (or COX6B2), COX6C, COX7A1 (or COX7A2), COX7B, COX7C, COX8B and NDUFA4, which are encoded in the nuclear genome. The complex exists as a monomer or a dimer and forms supercomplexes (SCs) in the inner mitochondrial membrane with NADH-ubiquinone oxidoreductase (complex I, CI) and ubiquinol-cytochrome c oxidoreductase (cytochrome b-c1 complex, complex III, CIII), resulting in different assemblies (supercomplex SCI(1)III(2)IV(1) and megacomplex MCI(2)III(2)IV(2)).

The protein localises to the mitochondrion inner membrane. It functions in the pathway energy metabolism; oxidative phosphorylation. In terms of biological role, component of the cytochrome c oxidase, the last enzyme in the mitochondrial electron transport chain which drives oxidative phosphorylation. The respiratory chain contains 3 multisubunit complexes succinate dehydrogenase (complex II, CII), ubiquinol-cytochrome c oxidoreductase (cytochrome b-c1 complex, complex III, CIII) and cytochrome c oxidase (complex IV, CIV), that cooperate to transfer electrons derived from NADH and succinate to molecular oxygen, creating an electrochemical gradient over the inner membrane that drives transmembrane transport and the ATP synthase. Cytochrome c oxidase is the component of the respiratory chain that catalyzes the reduction of oxygen to water. Electrons originating from reduced cytochrome c in the intermembrane space (IMS) are transferred via the dinuclear copper A center (CU(A)) of subunit 2 and heme A of subunit 1 to the active site in subunit 1, a binuclear center (BNC) formed by heme A3 and copper B (CU(B)). The BNC reduces molecular oxygen to 2 water molecules using 4 electrons from cytochrome c in the IMS and 4 protons from the mitochondrial matrix. This Bos taurus (Bovine) protein is Cytochrome c oxidase subunit 6C (COX6C).